The primary structure comprises 934 residues: Serine/threonine-protein kinase PknD (934 aa).

The region spanning 4 to 296 (YELIRLIGKG…ELRQALQPYL (293 aa)) is the Protein kinase domain. Residues 10-18 (IGKGGMGEV) and lysine 33 contribute to the ATP site. Aspartate 138 acts as the Proton acceptor in catalysis.

The protein belongs to the protein kinase superfamily. Ser/Thr protein kinase family. As to quaternary structure, interacts with Pkn1. Autophosphorylated on serine and threonine residues.

The enzyme catalyses L-seryl-[protein] + ATP = O-phospho-L-seryl-[protein] + ADP + H(+). The catalysed reaction is L-threonyl-[protein] + ATP = O-phospho-L-threonyl-[protein] + ADP + H(+). Together with the serine/threonine kinase Pkn1, may play a role in the specific interactions with host proteins during intracellular growth. Autophosphorylates and also phosphorylates Pkn1. The protein is Serine/threonine-protein kinase PknD of Chlamydia trachomatis serovar D (strain ATCC VR-885 / DSM 19411 / UW-3/Cx).